Here is a 1404-residue protein sequence, read N- to C-terminus: DNA-directed RNA polymerase subunit beta' (1404 aa).

The Zn(2+) site is built by Cys72, Cys74, Cys87, and Cys90. Mg(2+) is bound by residues Asp462, Asp464, and Asp466. Zn(2+)-binding residues include Cys816, Cys890, Cys897, and Cys900.

This sequence belongs to the RNA polymerase beta' chain family. In terms of assembly, the RNAP catalytic core consists of 2 alpha, 1 beta, 1 beta' and 1 omega subunit. When a sigma factor is associated with the core the holoenzyme is formed, which can initiate transcription. Mg(2+) is required as a cofactor. The cofactor is Zn(2+).

It carries out the reaction RNA(n) + a ribonucleoside 5'-triphosphate = RNA(n+1) + diphosphate. Its function is as follows. DNA-dependent RNA polymerase catalyzes the transcription of DNA into RNA using the four ribonucleoside triphosphates as substrates. The protein is DNA-directed RNA polymerase subunit beta' of Azoarcus sp. (strain BH72).